The following is a 277-amino-acid chain: Shikimate dehydrogenase (NADP(+)) (277 aa).

Residues 17–19 and Thr64 each bind shikimate; that span reads SRS. Lys68 (proton acceptor) is an active-site residue. Asn88 and Asp103 together coordinate shikimate. Residues 128–132 and Leu217 contribute to the NADP(+) site; that span reads GAGGS. Tyr219 contacts shikimate. Residue Gly240 participates in NADP(+) binding.

The protein belongs to the shikimate dehydrogenase family. Homodimer.

It carries out the reaction shikimate + NADP(+) = 3-dehydroshikimate + NADPH + H(+). It participates in metabolic intermediate biosynthesis; chorismate biosynthesis; chorismate from D-erythrose 4-phosphate and phosphoenolpyruvate: step 4/7. Its function is as follows. Involved in the biosynthesis of the chorismate, which leads to the biosynthesis of aromatic amino acids. Catalyzes the reversible NADPH linked reduction of 3-dehydroshikimate (DHSA) to yield shikimate (SA). This chain is Shikimate dehydrogenase (NADP(+)), found in Afipia carboxidovorans (strain ATCC 49405 / DSM 1227 / KCTC 32145 / OM5) (Oligotropha carboxidovorans).